We begin with the raw amino-acid sequence, 429 residues long: 3-phosphoshikimate 1-carboxyvinyltransferase (429 aa).

Residues K23, S24, and R28 each contribute to the 3-phosphoshikimate site. K23 is a binding site for phosphoenolpyruvate. Positions 95 and 123 each coordinate phosphoenolpyruvate. The 3-phosphoshikimate site is built by S168, Q170, D316, and K343. Q170 contacts phosphoenolpyruvate. D316 (proton acceptor) is an active-site residue. Residues R347 and R389 each coordinate phosphoenolpyruvate.

Belongs to the EPSP synthase family. Monomer.

The protein localises to the cytoplasm. It carries out the reaction 3-phosphoshikimate + phosphoenolpyruvate = 5-O-(1-carboxyvinyl)-3-phosphoshikimate + phosphate. Its pathway is metabolic intermediate biosynthesis; chorismate biosynthesis; chorismate from D-erythrose 4-phosphate and phosphoenolpyruvate: step 6/7. Functionally, catalyzes the transfer of the enolpyruvyl moiety of phosphoenolpyruvate (PEP) to the 5-hydroxyl of shikimate-3-phosphate (S3P) to produce enolpyruvyl shikimate-3-phosphate and inorganic phosphate. This chain is 3-phosphoshikimate 1-carboxyvinyltransferase, found in Oceanobacillus iheyensis (strain DSM 14371 / CIP 107618 / JCM 11309 / KCTC 3954 / HTE831).